The following is a 262-amino-acid chain: tRNA pseudouridine synthase A (262 aa).

The active-site Nucleophile is the D56. Y114 contributes to the substrate binding site.

Belongs to the tRNA pseudouridine synthase TruA family. Homodimer.

It catalyses the reaction uridine(38/39/40) in tRNA = pseudouridine(38/39/40) in tRNA. Functionally, formation of pseudouridine at positions 38, 39 and 40 in the anticodon stem and loop of transfer RNAs. The chain is tRNA pseudouridine synthase A from Lactiplantibacillus plantarum (strain ATCC BAA-793 / NCIMB 8826 / WCFS1) (Lactobacillus plantarum).